The sequence spans 759 residues: Inhibitor of nuclear factor kappa-B kinase subunit alpha (759 aa).

The segment at 1–20 (MERGAERGPPPAPGGVALRG) is disordered. In terms of domain architecture, Protein kinase spans 29 to 316 (WEMRDRLGTG…PETNSPKCFL (288 aa)). ATP contacts are provided by residues 35-43 (LGTGGFGNV) and lysine 58. Aspartate 158 functions as the Proton acceptor in the catalytic mechanism. Residues 469–490 (LLRYNANLIKMKNNMVSASQQL) form a leucine-zipper region. A compositionally biased stretch (polar residues) spans 691–703 (TPAATWVPQSSSE). Positions 691-715 (TPAATWVPQSSSEYAPHPLSSMATP) are disordered. Positions 753-758 (FDWSWL) are NEMO-binding.

Belongs to the protein kinase superfamily. Ser/Thr protein kinase family. I-kappa-B kinase subfamily.

The protein resides in the cytoplasm. Its subcellular location is the nucleus. It catalyses the reaction L-seryl-[I-kappa-B protein] + ATP = O-phospho-L-seryl-[I-kappa-B protein] + ADP + H(+). Its activity is regulated as follows. Activated when phosphorylated and inactivated when dephosphorylated. Phosphorylates inhibitors of NF-kappa-B thus leading to the dissociation of the inhibitor/NF-kappa-B complex and ultimately the degradation of the inhibitor. Phosphorylates 'Ser-10' of histone H3 at NF-kappa-B-regulated promoters during inflammatory responses triggered by cytokines. In Gallus gallus (Chicken), this protein is Inhibitor of nuclear factor kappa-B kinase subunit alpha (CHUK).